A 418-amino-acid chain; its full sequence is ORC1-type DNA replication protein 2 (418 aa).

Residues 72–76 (TGKTV), tyrosine 218, and arginine 230 each bind ATP.

This sequence belongs to the CDC6/cdc18 family.

Functionally, involved in regulation of DNA replication. In Sulfurisphaera tokodaii (strain DSM 16993 / JCM 10545 / NBRC 100140 / 7) (Sulfolobus tokodaii), this protein is ORC1-type DNA replication protein 2 (cdc6-2).